The chain runs to 143 residues: 6,7-dimethyl-8-ribityllumazine synthase (143 aa).

5-amino-6-(D-ribitylamino)uracil is bound by residues Phe-13, 45 to 47, and 69 to 71; these read TFD and CVI. 74–75 serves as a coordination point for (2S)-2-hydroxy-3-oxobutyl phosphate; sequence ET. His-77 serves as the catalytic Proton donor. Residue Leu-102 participates in 5-amino-6-(D-ribitylamino)uracil binding. Arg-117 contributes to the (2S)-2-hydroxy-3-oxobutyl phosphate binding site.

Belongs to the DMRL synthase family.

The enzyme catalyses (2S)-2-hydroxy-3-oxobutyl phosphate + 5-amino-6-(D-ribitylamino)uracil = 6,7-dimethyl-8-(1-D-ribityl)lumazine + phosphate + 2 H2O + H(+). It participates in cofactor biosynthesis; riboflavin biosynthesis; riboflavin from 2-hydroxy-3-oxobutyl phosphate and 5-amino-6-(D-ribitylamino)uracil: step 1/2. In terms of biological role, catalyzes the formation of 6,7-dimethyl-8-ribityllumazine by condensation of 5-amino-6-(D-ribitylamino)uracil with 3,4-dihydroxy-2-butanone 4-phosphate. This is the penultimate step in the biosynthesis of riboflavin. The protein is 6,7-dimethyl-8-ribityllumazine synthase of Archaeoglobus fulgidus (strain ATCC 49558 / DSM 4304 / JCM 9628 / NBRC 100126 / VC-16).